Here is a 229-residue protein sequence, read N- to C-terminus: Protein GLC8 (229 aa).

Disordered stretches follow at residues 1 to 21 (MGGI…QQDP), 35 to 62 (TQKN…EIIG), and 107 to 229 (QFQD…TKEP). At Ser12 the chain carries Phosphoserine. The segment covering 107–117 (QFQDIHIDEPK) has biased composition (basic and acidic residues). Thr118 is modified (phosphothreonine; by PHO85). Position 158 is a phosphoserine (Ser158). Positions 164–173 (FEIKENKQPD) are enriched in basic and acidic residues. Residues 175–184 (ETNDENDEDS) show a composition bias toward acidic residues. Ser184 carries the phosphoserine modification. The span at 185-196 (PEARHKKFEEMR) shows a compositional bias: basic and acidic residues.

Phosphorylated by the cyclin-CDKs PCL6-PHO85 and PCL7-PHO85. Phosphorylation of Thr-118 inactivates GLC8.

Modulator of GLC7 type-1 protein phosphatase. The sequence is that of Protein GLC8 (GLC8) from Saccharomyces cerevisiae (strain ATCC 204508 / S288c) (Baker's yeast).